An 804-amino-acid polypeptide reads, in one-letter code: MKFTLSWLKDHLETDATLDEIVEKLTDIGLEVESVDDRAAFRAFTIARVLTATRHPDADKLQVLSVDTGDGKPVQVVCGAPNARAGLVGVLGRPGDYVPGLDVTLSVGKIRGVESFGMMCSERELELSDEHNGIIDLAENAPVGTSFAAYMGLDDPIIEIGLTPNRADCTGIRGIARDLAAAGLGTLKNTLPDAVKGEGETPVKVILDQDAGNPFCTGFALRMVKGVKNGPSPKWMQQRLKAIGLRPINALVDITNYVTFDQGRPLHVFDAAKVKGNLTVRTARDGETILALDQREYKLNAGMYVIADENGPESIAGIMGGEHSGCDENTVDVLIESALWDPRMIARTGRELGIVTDARYRFERGVDPEMMVPGAEIATKLVLELCGGQPTVLDVVGYKPHTARVIDFPVTEVKRLTGLDVSYEDAFDILKRLGFGVEGDGKTIRATVPSWRGDVEGKADLVEEVMRIHGINRIDPQPLPSHGAVNGRILTTLQIRTRHARRMLASRGMMEAVTYSFISEAQAKAFGGGKPELKLANPIAADMSDMRPSLLPGLLAAAQRNADRGFGDIALFEVSGIYEGDTPDKQRRVAGGVRRGTAKVEGAGRFWAGNAAPVGVFDAKADALAALEAAGAPVDRIQIEAGGPEWLHPGRSGTLKLGPKVVLGTFGEFHPDTLEALDVSGALCGFEVYLDAIPEPKAKSARTKPALSLSLFQSLKRDYAFVVDAAVEAGNVVKAVSSADKKLIVGVQVFDIFTGASLGEGKKSIAVEVLLQPQDRTLTDEDLEALSKQIVASVAKQTGGVLRG.

Residues 38–148 form the tRNA-binding domain; the sequence is RAAFRAFTIA…ENAPVGTSFA (111 aa). One can recognise a B5 domain in the interval 401–476; it reads HTARVIDFPV…RIHGINRIDP (76 aa). 4 residues coordinate Mg(2+): aspartate 454, aspartate 460, glutamate 463, and glutamate 464. The FDX-ACB domain maps to 710–803; sequence SLFQSLKRDY…VAKQTGGVLR (94 aa).

It belongs to the phenylalanyl-tRNA synthetase beta subunit family. Type 1 subfamily. As to quaternary structure, tetramer of two alpha and two beta subunits. Requires Mg(2+) as cofactor.

Its subcellular location is the cytoplasm. It carries out the reaction tRNA(Phe) + L-phenylalanine + ATP = L-phenylalanyl-tRNA(Phe) + AMP + diphosphate + H(+). The polypeptide is Phenylalanine--tRNA ligase beta subunit (Brucella suis biovar 1 (strain 1330)).